The primary structure comprises 304 residues: Putative integrase/recombinase HI_1414 (304 aa).

The 80-residue stretch at 30–109 (TLFSDVIKRY…TIGHIFKIAL (80 aa)) folds into the Core-binding (CB) domain. The 174-residue stretch at 131–304 (PRTQRVTEEN…DMAEVAELLD (174 aa)) folds into the Tyr recombinase domain. Active-site residues include arginine 174, lysine 199, histidine 256, arginine 259, and histidine 281. Tyrosine 291 functions as the O-(3'-phospho-DNA)-tyrosine intermediate in the catalytic mechanism.

It belongs to the 'phage' integrase family.

The protein is Putative integrase/recombinase HI_1414 of Haemophilus influenzae (strain ATCC 51907 / DSM 11121 / KW20 / Rd).